Here is a 39-residue protein sequence, read N- to C-terminus: ORF8a protein (39 aa).

The signal sequence occupies residues 1–15; that stretch reads MKLLIVLTCISLCSC. One can recognise an SARS ORF8 Ig-like domain in the interval 16 to 39; that stretch reads ICTVVQRCASNKPHVLEDPCKVQH.

The polypeptide is ORF8a protein (Homo sapiens (Human)).